The following is a 255-amino-acid chain: CCAAT/enhancer-binding protein delta (255 aa).

Disordered stretches follow at residues methionine 1–alanine 42, glycine 91–leucine 121, and proline 138–glutamine 206. Lysine 107 participates in a covalent cross-link: Glycyl lysine isopeptide (Lys-Gly) (interchain with G-Cter in SUMO). The segment covering glutamine 141–glycine 161 has biased composition (pro residues). A compositionally biased stretch (basic and acidic residues) spans alanine 163–asparagine 187. One can recognise a bZIP domain in the interval serine 177 to leucine 240. The interval arginine 181–lysine 208 is basic motif. Positions leucine 212–leucine 240 are leucine-zipper.

This sequence belongs to the bZIP family. C/EBP subfamily. As to quaternary structure, binds DNA as a homodimer and as a heterodimer. Can form stable heterodimers with CEBPA, CEBPB and CEBPE. Directly interacts with SPI1/PU.1; this interaction does not affect DNA-binding properties of each partner. Interacts with PRDM16.

It is found in the nucleus. Functionally, transcription activator that recognizes two different DNA motifs: the CCAAT homology common to many promoters and the enhanced core homology common to many enhancers. Important transcription factor regulating the expression of genes involved in immune and inflammatory responses. Transcriptional activator that enhances IL6 transcription alone and as heterodimer with CEBPB. This chain is CCAAT/enhancer-binding protein delta (CEBPD), found in Ovis aries (Sheep).